Consider the following 370-residue polypeptide: CCA-adding enzyme (370 aa).

ATP is bound by residues Gly-8 and Arg-11. Residues Gly-8 and Arg-11 each contribute to the CTP site. Residues Asp-21 and Asp-23 each coordinate Mg(2+). ATP is bound by residues Arg-91, Arg-137, and Arg-140. The CTP site is built by Arg-91, Arg-137, and Arg-140.

Belongs to the tRNA nucleotidyltransferase/poly(A) polymerase family. Bacterial CCA-adding enzyme type 2 subfamily. Mg(2+) is required as a cofactor.

The enzyme catalyses a tRNA precursor + 2 CTP + ATP = a tRNA with a 3' CCA end + 3 diphosphate. It carries out the reaction a tRNA with a 3' CCA end + 2 CTP + ATP = a tRNA with a 3' CCACCA end + 3 diphosphate. Its function is as follows. Catalyzes the addition and repair of the essential 3'-terminal CCA sequence in tRNAs without using a nucleic acid template. Adds these three nucleotides in the order of C, C, and A to the tRNA nucleotide-73, using CTP and ATP as substrates and producing inorganic pyrophosphate. tRNA 3'-terminal CCA addition is required both for tRNA processing and repair. Also involved in tRNA surveillance by mediating tandem CCA addition to generate a CCACCA at the 3' terminus of unstable tRNAs. While stable tRNAs receive only 3'-terminal CCA, unstable tRNAs are marked with CCACCA and rapidly degraded. The chain is CCA-adding enzyme from Pseudomonas putida (strain W619).